Reading from the N-terminus, the 209-residue chain is Ion-translocating oxidoreductase complex subunit G (209 aa).

A helical membrane pass occupies residues 9–29 (GLILAVFACVSTGLVALTYAL). FMN phosphoryl threonine is present on Thr-175.

Belongs to the RnfG family. The complex is composed of six subunits: RnfA, RnfB, RnfC, RnfD, RnfE and RnfG. It depends on FMN as a cofactor.

The protein localises to the cell inner membrane. Functionally, part of a membrane-bound complex that couples electron transfer with translocation of ions across the membrane. This chain is Ion-translocating oxidoreductase complex subunit G, found in Vibrio cholerae serotype O1 (strain ATCC 39315 / El Tor Inaba N16961).